Consider the following 93-residue polypeptide: MKTIILFLTLLVISSSCTSIITKTMNSKETTYLDSPAVSPSIDQYLVDIHLGHSFLQGVMSFCYDCGKACFRRGKNLARCKKFVCRCTKSGIK.

The N-terminal stretch at M1–S19 is a signal peptide. Intrachain disulfides connect C63/C80, C66/C85, and C70/C87.

Belongs to the DEFL family.

The protein localises to the secreted. The polypeptide is Defensin-like protein 210 (Arabidopsis thaliana (Mouse-ear cress)).